The following is a 306-amino-acid chain: Armadillo repeat-containing protein 10 (306 aa).

The helical transmembrane segment at 7–29 (VGWVAAGLVLGAGACYCIYRLTR) threads the bilayer. The residue at position 43 (serine 43) is a Phosphoserine. Threonine 48 carries the post-translational modification Phosphothreonine. An ARM repeat occupies 101 to 143 (GGIPIVGSKINSLNQSIKEKALNALNNLSVNVENQTKIKIYVR).

Interacts with the DNA-binding domain of p53/TP53.

The protein resides in the endoplasmic reticulum membrane. The protein localises to the mitochondrion outer membrane. In terms of biological role, may play a role in cell survival and cell growth. May suppress the transcriptional activity of p53/TP53. The polypeptide is Armadillo repeat-containing protein 10 (Armc10) (Rattus norvegicus (Rat)).